Consider the following 1054-residue polypeptide: DIS3-like exonuclease 1 (1054 aa).

Residues 236 to 313 enclose the CSD1 domain; it reads AGIKSGRYIQ…WKGRTAALCE (78 aa). The tract at residues 313 to 332 is disordered; sequence ENDSEDKASGESPSEPMPTG. The region spanning 365 to 431 is the CSD2 domain; that stretch reads ILVTPWDYRI…GEIATILVEN (67 aa). The RNB domain maps to 465-816; that stretch reads RRDLRSTHLV…VHRLLMAAIS (352 aa). Phosphoserine is present on S989.

Belongs to the RNR ribonuclease family. In terms of assembly, component of the RNA exosome complex. The catalytically inactive RNA exosome core (Exo-9) complex is believed to associate with catalytic subunits EXOSC10, and DIS3 or DIS3L in cytoplasmic- and nuclear-specific RNA exosome complex forms. Mg(2+) is required as a cofactor.

It localises to the cytoplasm. It catalyses the reaction Exonucleolytic cleavage in the 3'- to 5'-direction to yield nucleoside 5'-phosphates.. Functionally, catalytic component of the RNA exosome complex which has 3'-&gt;5' exoribonuclease activity and participates in a multitude of cellular RNA processing and degradation events. In the cytoplasm, the RNA exosome complex is involved in general mRNA turnover and specifically degrades inherently unstable mRNAs containing AU-rich elements (AREs) within their 3' untranslated regions, and in RNA surveillance pathways, preventing translation of aberrant mRNAs. It seems to be involved in degradation of histone mRNA. The polypeptide is DIS3-like exonuclease 1 (Dis3l) (Rattus norvegicus (Rat)).